Reading from the N-terminus, the 191-residue chain is MGLDAVIAEIKEKGRHEAETIVNEGSARKDEIMNAAKQEVEKIHLTVRDEVEKNLSHIISQEEAAAHLIVKRQVLNAQKDLMDQVYKQALDKIVSMPESFHEEAITSLLRKAKEEIPKGRVSCAARDEKILKNVLKQSEFSAYTFGSVIDTDGGIIVESDDGQLQVDYSYRTFLNQVWESGLKDASDSLFA.

Belongs to the V-ATPase E subunit family. As to quaternary structure, has multiple subunits with at least A(3), B(3), C, D, E, F, H, I and proteolipid K(x).

The protein localises to the cell membrane. Component of the A-type ATP synthase that produces ATP from ADP in the presence of a proton gradient across the membrane. This Methanospirillum hungatei JF-1 (strain ATCC 27890 / DSM 864 / NBRC 100397 / JF-1) protein is A-type ATP synthase subunit E 1.